The sequence spans 454 residues: UDP-N-acetylmuramoylalanine--D-glutamate ligase (454 aa).

Gly114–Thr120 contacts ATP.

The protein belongs to the MurCDEF family.

Its subcellular location is the cytoplasm. The enzyme catalyses UDP-N-acetyl-alpha-D-muramoyl-L-alanine + D-glutamate + ATP = UDP-N-acetyl-alpha-D-muramoyl-L-alanyl-D-glutamate + ADP + phosphate + H(+). Its pathway is cell wall biogenesis; peptidoglycan biosynthesis. Functionally, cell wall formation. Catalyzes the addition of glutamate to the nucleotide precursor UDP-N-acetylmuramoyl-L-alanine (UMA). The sequence is that of UDP-N-acetylmuramoylalanine--D-glutamate ligase from Desulfitobacterium hafniense (strain DSM 10664 / DCB-2).